The following is a 210-amino-acid chain: Glutathione S-transferase P 1 (210 aa).

The GST N-terminal domain maps to 1-80; sequence PEYTIIYFNA…LLARNHDLYG (80 aa). Residues tyrosine 7, arginine 13, tryptophan 38, lysine 44, 51–52, and 64–65 contribute to the glutathione site; these read QL and QS. A GST C-terminal domain is found at 82–203; that stretch reads NPREASLIDM…SSDAHKKRPI (122 aa).

The protein belongs to the GST superfamily. Pi family. As to quaternary structure, homodimer.

It localises to the cytoplasm. It is found in the mitochondrion. The protein localises to the nucleus. It carries out the reaction RX + glutathione = an S-substituted glutathione + a halide anion + H(+). Functionally, conjugation of reduced glutathione to a wide number of exogenous and endogenous hydrophobic electrophiles. In Bufo bufo (European toad), this protein is Glutathione S-transferase P 1.